We begin with the raw amino-acid sequence, 585 residues long: uncharacterized protein (585 aa).

A run of 6 helical transmembrane segments spans residues 18 to 38 (FMWSLLAMLLMTAITVVYPII), 55 to 75 (AAWVSLGFIAVMVLKGMATFF), 128 to 148 (FFLSYGLAELIRFGLLVAISL), 150 to 170 (VMFYYSVPLTLVTIAVLPFLA), 238 to 258 (IWSAYFPLMEFIGNTCIVALL), and 276 to 296 (VAFFSLVNYMMWPIMNLGFVI). The 284-residue stretch at 18–301 (FMWSLLAMLL…LGFVINMFSQ (284 aa)) folds into the ABC transmembrane type-1 domain. The ABC transporter domain maps to 335-570 (VHFKNVSLAY…GGYYKKIYDL (236 aa)). Position 369–376 (369–376 (GPTGSGKS)) interacts with ATP.

It belongs to the ABC transporter superfamily.

The protein resides in the cell membrane. This is an uncharacterized protein from Bacillus subtilis (strain 168).